Consider the following 220-residue polypeptide: Protein Syd (220 aa).

It belongs to the Syd family.

It is found in the cell inner membrane. Functionally, interacts with the SecY protein in vivo. May bind preferentially to an uncomplexed state of SecY, thus functioning either as a chelating agent for excess SecY in the cell or as a regulatory factor that negatively controls the translocase function. This chain is Protein Syd, found in Shewanella loihica (strain ATCC BAA-1088 / PV-4).